A 181-amino-acid polypeptide reads, in one-letter code: uncharacterized protein (181 aa).

An N-terminal signal peptide occupies residues 1–22 (MNKKSLLVVLVIALAVVPFAAT).

This is an uncharacterized protein from Halorubrum pleomorphic virus 1 (HRPV-1).